The chain runs to 66 residues: Large ribosomal subunit protein bL35 (66 aa).

Composition is skewed to basic residues over residues 1 to 26 (MPKM…KRSH) and 38 to 48 (QKQKRKLRKSA). Positions 1 to 48 (MPKMKTHKGAAKRFKKTGSGKLKRSHAFTSHLFANKSQKQKRKLRKSA) are disordered.

It belongs to the bacterial ribosomal protein bL35 family.

This Halalkalibacterium halodurans (strain ATCC BAA-125 / DSM 18197 / FERM 7344 / JCM 9153 / C-125) (Bacillus halodurans) protein is Large ribosomal subunit protein bL35.